Reading from the N-terminus, the 527-residue chain is Putative pumilio homolog 13 (527 aa).

The disordered stretch occupies residues 22–51 (ENMTTAASSSQSQPPQMQSSKFHQPENHIH). The span at 24-41 (MTTAASSSQSQPPQMQSS) shows a compositional bias: low complexity. The region spanning 184–527 (GVNNSWRSNE…GNKILEKLNI (344 aa)) is the PUM-HD domain. Pumilio repeat units follow at residues 205–243 (SMEN…MIFD), 244–279 (GLIV…LIVD), 283–321 (RHIS…RIMD), 322–357 (AISS…RLLE), 358–396 (VVSQ…RLIS), 397–432 (EVIE…LLVN), 433–468 (KLLR…IVVD), and 469–503 (LLRG…MLRY).

It localises to the cytoplasm. Sequence-specific RNA-binding protein that regulates translation and mRNA stability by binding the 3'-UTR of target mRNAs. This chain is Putative pumilio homolog 13 (APUM13), found in Arabidopsis thaliana (Mouse-ear cress).